We begin with the raw amino-acid sequence, 201 residues long: Cobalt-precorrin-7 C(5)-methyltransferase (201 aa).

This sequence belongs to the precorrin methyltransferase family.

The enzyme catalyses Co-precorrin-7 + S-adenosyl-L-methionine = Co-precorrin-8X + S-adenosyl-L-homocysteine + H(+). It participates in cofactor biosynthesis; adenosylcobalamin biosynthesis; cob(II)yrinate a,c-diamide from sirohydrochlorin (anaerobic route): step 8/10. Its function is as follows. Catalyzes the methylation of C-5 in cobalt-precorrin-7 to form cobalt-precorrin-8. The polypeptide is Cobalt-precorrin-7 C(5)-methyltransferase (cbiE) (Salmonella typhi).